The following is a 250-amino-acid chain: Isoprenyl transferase (250 aa).

Aspartate 27 is an active-site residue. Position 27 (aspartate 27) interacts with Mg(2+). Substrate contacts are provided by residues 28-31 (GNRR), tryptophan 32, histidine 48, and 76-78 (STE). Residue asparagine 79 is the Proton acceptor of the active site. Residues phenylalanine 80, arginine 82, arginine 199, and 205–207 (RVS) each bind substrate. Glutamate 218 contributes to the Mg(2+) binding site.

The protein belongs to the UPP synthase family. In terms of assembly, homodimer. Mg(2+) is required as a cofactor.

Its function is as follows. Catalyzes the condensation of isopentenyl diphosphate (IPP) with allylic pyrophosphates generating different type of terpenoids. This chain is Isoprenyl transferase, found in Chlamydia pneumoniae (Chlamydophila pneumoniae).